We begin with the raw amino-acid sequence, 206 residues long: Small ribosomal subunit protein uS4 (206 aa).

The S4 RNA-binding domain maps to 96-159; it reads SRLDNVVYRM…KKQARIVEGL (64 aa).

Belongs to the universal ribosomal protein uS4 family. As to quaternary structure, part of the 30S ribosomal subunit. Contacts protein S5. The interaction surface between S4 and S5 is involved in control of translational fidelity.

In terms of biological role, one of the primary rRNA binding proteins, it binds directly to 16S rRNA where it nucleates assembly of the body of the 30S subunit. Its function is as follows. With S5 and S12 plays an important role in translational accuracy. The polypeptide is Small ribosomal subunit protein uS4 (Chromobacterium violaceum (strain ATCC 12472 / DSM 30191 / JCM 1249 / CCUG 213 / NBRC 12614 / NCIMB 9131 / NCTC 9757 / MK)).